The primary structure comprises 327 residues: Aspartate--ammonia ligase (327 aa).

It belongs to the class-II aminoacyl-tRNA synthetase family. AsnA subfamily.

It is found in the cytoplasm. It catalyses the reaction L-aspartate + NH4(+) + ATP = L-asparagine + AMP + diphosphate + H(+). The protein operates within amino-acid biosynthesis; L-asparagine biosynthesis; L-asparagine from L-aspartate (ammonia route): step 1/1. This Bacillus mycoides (strain KBAB4) (Bacillus weihenstephanensis) protein is Aspartate--ammonia ligase.